Here is a 523-residue protein sequence, read N- to C-terminus: Exodeoxyribonuclease 7 large subunit (523 aa).

A disordered region spans residues 502–523; that stretch reads PGASPAARTRAGKAKADQGSLF.

Belongs to the XseA family. As to quaternary structure, heterooligomer composed of large and small subunits.

The protein resides in the cytoplasm. The enzyme catalyses Exonucleolytic cleavage in either 5'- to 3'- or 3'- to 5'-direction to yield nucleoside 5'-phosphates.. In terms of biological role, bidirectionally degrades single-stranded DNA into large acid-insoluble oligonucleotides, which are then degraded further into small acid-soluble oligonucleotides. This chain is Exodeoxyribonuclease 7 large subunit, found in Rhodospirillum centenum (strain ATCC 51521 / SW).